A 408-amino-acid chain; its full sequence is MKNIIILIINTGSSSLKFTLYEYQYQSEQILASGIIEKIKTTQAIIKIKFKNKLLELTNLNIKSHKKALKHLIKTLTNKKTKIINYLDQIQGIGHRIVHGGAQFKNSVIINQNVLNELKKISHLAPLHNPIAIKVIEQMFILFPNAKQVACFDTSWHQTMNQKAFLYATPYSWYKDYHIRKYGFHGLSYAYITKRTAIILNKNIEDLNLIILHLGNGASINAVQKGRSYDTSMGLTPLEGLVMGTRSGDIDPTIIPLMSKILKKTTKQIENILNKESGMLGISCKSNDLRDIWIESNNNEYNSKLAVEIMTYRIKKYIGSYLAALDFNIDAIIFTAGIGTSDYEIRKLSLQGFEKIGIKIDFQKNNLAIDKNTEYDISSNQSNIKILVIPTNEELTILEDTYDLIKNN.

Asn-10 provides a ligand contact to Mg(2+). Lys-17 contacts ATP. Arg-96 serves as a coordination point for substrate. Asp-153 (proton donor/acceptor) is an active-site residue. ATP is bound by residues 213–217 (HLGNG) and 288–290 (DLR). Glu-393 provides a ligand contact to Mg(2+).

Belongs to the acetokinase family. As to quaternary structure, homodimer. The cofactor is Mg(2+). Mn(2+) serves as cofactor.

It is found in the cytoplasm. The catalysed reaction is acetate + ATP = acetyl phosphate + ADP. It functions in the pathway metabolic intermediate biosynthesis; acetyl-CoA biosynthesis; acetyl-CoA from acetate: step 1/2. Its function is as follows. Catalyzes the formation of acetyl phosphate from acetate and ATP. Can also catalyze the reverse reaction. The sequence is that of Acetate kinase from Borrelia recurrentis (strain A1).